The sequence spans 328 residues: DNA-directed RNA polymerase subunit alpha (328 aa).

An alpha N-terminal domain (alpha-NTD) region spans residues 1–231; sequence MIYQMQMPTK…DHITFFANFS (231 aa). The segment at 247–328 is alpha C-terminal domain (alpha-CTD); sequence DEFESMRKLL…MDITRYQLKG (82 aa).

It belongs to the RNA polymerase alpha chain family. Homodimer. The RNAP catalytic core consists of 2 alpha, 1 beta, 1 beta' and 1 omega subunit. When a sigma factor is associated with the core the holoenzyme is formed, which can initiate transcription.

It catalyses the reaction RNA(n) + a ribonucleoside 5'-triphosphate = RNA(n+1) + diphosphate. Its function is as follows. DNA-dependent RNA polymerase catalyzes the transcription of DNA into RNA using the four ribonucleoside triphosphates as substrates. In Chlorobaculum tepidum (strain ATCC 49652 / DSM 12025 / NBRC 103806 / TLS) (Chlorobium tepidum), this protein is DNA-directed RNA polymerase subunit alpha.